The following is a 461-amino-acid chain: Sensor histidine kinase MctS (461 aa).

2 consecutive transmembrane segments (helical) span residues 7–27 and 203–223; these read IIAL…TFIT and FVIV…TCML. The residue at position 259 (His259) is a Phosphohistidine; by autocatalysis. A Histidine kinase domain is found at 360-450; that stretch reads LYRVAQEAFN…TLTAMMPKSA (91 aa).

The protein resides in the cell membrane. The enzyme catalyses ATP + protein L-histidine = ADP + protein N-phospho-L-histidine.. Its function is as follows. Member of the two-component regulatory system MctS/MctR, which activates mctP expression. The chain is Sensor histidine kinase MctS from Rhizobium johnstonii (strain DSM 114642 / LMG 32736 / 3841) (Rhizobium leguminosarum bv. viciae).